Here is a 1058-residue protein sequence, read N- to C-terminus: Isoleucine--tRNA ligase (1058 aa).

A 'HIGH' region motif is present at residues 48–58 (PYTTGHIHLGT). Residues 596–600 (KMSKS) carry the 'KMSKS' region motif. Lys-599 lines the ATP pocket.

This sequence belongs to the class-I aminoacyl-tRNA synthetase family. IleS type 2 subfamily. As to quaternary structure, monomer. Requires Zn(2+) as cofactor.

Its subcellular location is the cytoplasm. The catalysed reaction is tRNA(Ile) + L-isoleucine + ATP = L-isoleucyl-tRNA(Ile) + AMP + diphosphate. In terms of biological role, catalyzes the attachment of isoleucine to tRNA(Ile). As IleRS can inadvertently accommodate and process structurally similar amino acids such as valine, to avoid such errors it has two additional distinct tRNA(Ile)-dependent editing activities. One activity is designated as 'pretransfer' editing and involves the hydrolysis of activated Val-AMP. The other activity is designated 'posttransfer' editing and involves deacylation of mischarged Val-tRNA(Ile). The chain is Isoleucine--tRNA ligase from Methanosarcina mazei (strain ATCC BAA-159 / DSM 3647 / Goe1 / Go1 / JCM 11833 / OCM 88) (Methanosarcina frisia).